The chain runs to 423 residues: Glutamyl-tRNA reductase (423 aa).

Substrate is bound by residues 49–52 (TCNR), Ser-109, 114–116 (EGQ), and Gln-120. The active-site Nucleophile is Cys-50. NADP(+) is bound at residue 189–194 (GAGETG).

Belongs to the glutamyl-tRNA reductase family. Homodimer.

The catalysed reaction is (S)-4-amino-5-oxopentanoate + tRNA(Glu) + NADP(+) = L-glutamyl-tRNA(Glu) + NADPH + H(+). It participates in porphyrin-containing compound metabolism; protoporphyrin-IX biosynthesis; 5-aminolevulinate from L-glutamyl-tRNA(Glu): step 1/2. Its pathway is porphyrin-containing compound metabolism; chlorophyll biosynthesis. Its function is as follows. Catalyzes the NADPH-dependent reduction of glutamyl-tRNA(Glu) to glutamate 1-semialdehyde (GSA). This Chlorobium limicola (strain DSM 245 / NBRC 103803 / 6330) protein is Glutamyl-tRNA reductase.